A 407-amino-acid polypeptide reads, in one-letter code: Serine/threonine transporter SstT (407 aa).

The next 9 helical transmembrane spans lie at 14–34 (GSLV…ATVS), 48–68 (FVGA…AASI), 82–102 (IVIL…LMSF), 141–161 (AVIT…GLAL), 192–212 (IGIF…AIAG), 218–238 (LVLL…IVFF), 290–310 (IPLG…ILTL), 316–336 (MGIQ…GVSA), and 363–383 (VAMQ…SAET).

The protein belongs to the dicarboxylate/amino acid:cation symporter (DAACS) (TC 2.A.23) family.

The protein localises to the cell inner membrane. The catalysed reaction is L-serine(in) + Na(+)(in) = L-serine(out) + Na(+)(out). The enzyme catalyses L-threonine(in) + Na(+)(in) = L-threonine(out) + Na(+)(out). In terms of biological role, involved in the import of serine and threonine into the cell, with the concomitant import of sodium (symport system). This chain is Serine/threonine transporter SstT, found in Shewanella pealeana (strain ATCC 700345 / ANG-SQ1).